A 117-amino-acid chain; its full sequence is Large ribosomal subunit protein bL20 (117 aa).

This sequence belongs to the bacterial ribosomal protein bL20 family.

Binds directly to 23S ribosomal RNA and is necessary for the in vitro assembly process of the 50S ribosomal subunit. It is not involved in the protein synthesizing functions of that subunit. This chain is Large ribosomal subunit protein bL20, found in Mannheimia succiniciproducens (strain KCTC 0769BP / MBEL55E).